Reading from the N-terminus, the 249-residue chain is Small ribosomal subunit protein uS3 (249 aa).

The 71-residue stretch at 39-109 folds into the KH type-2 domain; sequence IRTYVLARLK…EVKIDVVEVV (71 aa). Residues 226–239 are compositionally biased toward basic and acidic residues; the sequence is KERRNDAGARNRDS. Residues 226–249 are disordered; the sequence is KERRNDAGARNRDSRTKRRHRTKR. Over residues 240-249 the composition is skewed to basic residues; it reads RTKRRHRTKR.

Belongs to the universal ribosomal protein uS3 family. In terms of assembly, part of the 30S ribosomal subunit. Forms a tight complex with proteins S10 and S14.

In terms of biological role, binds the lower part of the 30S subunit head. Binds mRNA in the 70S ribosome, positioning it for translation. This Pelodictyon phaeoclathratiforme (strain DSM 5477 / BU-1) protein is Small ribosomal subunit protein uS3.